The primary structure comprises 336 residues: Probable allantoicase 2 (336 aa).

Belongs to the allantoicase family.

The catalysed reaction is allantoate + H2O = (S)-ureidoglycolate + urea. It participates in nitrogen metabolism; (S)-allantoin degradation; (S)-ureidoglycolate from allantoate (aminidohydrolase route): step 1/1. The chain is Probable allantoicase 2 from Burkholderia mallei (strain ATCC 23344).